The chain runs to 614 residues: Protein YehQ (614 aa).

SWIM-type zinc fingers lie at residues 55–89 (VRTQLANGQALKEAQCSCGANGMCRHRVMLVLSYQ) and 151–185 (SDVRFYSRSSIRFARCDCIEGTLCEHVVLAVQAFV).

The chain is Protein YehQ (yehQ) from Escherichia coli (strain K12).